Reading from the N-terminus, the 304-residue chain is Porphobilinogen deaminase (304 aa).

Cys-241 carries the post-translational modification S-(dipyrrolylmethanemethyl)cysteine.

This sequence belongs to the HMBS family. Monomer. The cofactor is dipyrromethane.

The enzyme catalyses 4 porphobilinogen + H2O = hydroxymethylbilane + 4 NH4(+). The protein operates within porphyrin-containing compound metabolism; protoporphyrin-IX biosynthesis; coproporphyrinogen-III from 5-aminolevulinate: step 2/4. Its function is as follows. Tetrapolymerization of the monopyrrole PBG into the hydroxymethylbilane pre-uroporphyrinogen in several discrete steps. This is Porphobilinogen deaminase from Vesicomyosocius okutanii subsp. Calyptogena okutanii (strain HA).